Consider the following 138-residue polypeptide: Thyrotropin subunit beta (138 aa).

The N-terminal stretch at 1–20 (MNAVVLFSVLFALACGQVSS) is a signal peptide. 6 disulfide bridges follow: cysteine 22/cysteine 72, cysteine 36/cysteine 87, cysteine 39/cysteine 125, cysteine 47/cysteine 103, cysteine 51/cysteine 105, and cysteine 108/cysteine 115. The N-linked (GlcNAc...) asparagine glycan is linked to asparagine 43. The propeptide occupies 133–138 (LGGFSG).

It belongs to the glycoprotein hormones subunit beta family. Heterodimer of a common alpha chain and a unique beta chain which confers biological specificity to thyrotropin, lutropin, follitropin and gonadotropin.

The protein localises to the secreted. Indispensable for the control of thyroid structure and metabolism. The protein is Thyrotropin subunit beta (Tshb) of Rattus norvegicus (Rat).